The following is a 268-amino-acid chain: Tryptophan synthase alpha chain (268 aa).

Catalysis depends on proton acceptor residues E49 and D60.

This sequence belongs to the TrpA family. Tetramer of two alpha and two beta chains.

It catalyses the reaction (1S,2R)-1-C-(indol-3-yl)glycerol 3-phosphate + L-serine = D-glyceraldehyde 3-phosphate + L-tryptophan + H2O. The protein operates within amino-acid biosynthesis; L-tryptophan biosynthesis; L-tryptophan from chorismate: step 5/5. Functionally, the alpha subunit is responsible for the aldol cleavage of indoleglycerol phosphate to indole and glyceraldehyde 3-phosphate. The polypeptide is Tryptophan synthase alpha chain (Vibrio vulnificus (strain YJ016)).